Consider the following 172-residue polypeptide: DNA-directed RNA polymerase II subunit RPB7 (172 aa).

It belongs to the eukaryotic RPB7/RPC8 RNA polymerase subunit family. Component of the RNA polymerase II (Pol II) complex consisting of 12 subunits. RPB4 and RPB7 form a subcomplex that protrudes from the 10-subunit Pol II core complex.

Its subcellular location is the nucleus. Its function is as follows. DNA-dependent RNA polymerase catalyzes the transcription of DNA into RNA using the four ribonucleoside triphosphates as substrates. Component of RNA polymerase II which synthesizes mRNA precursors and many functional non-coding RNAs. Pol II is the central component of the basal RNA polymerase II transcription machinery. It is composed of mobile elements that move relative to each other. RPB7 is part of a subcomplex with RPB4 that binds to a pocket formed by RPB1, RPB2 and RPB6 at the base of the clamp element. The RPB4-RPB7 subcomplex seems to lock the clamp via RPB7 in the closed conformation thus preventing double-stranded DNA to enter the active site cleft. The RPB4-RPB7 subcomplex binds single-stranded DNA and RNA. In Danio rerio (Zebrafish), this protein is DNA-directed RNA polymerase II subunit RPB7 (polr2g).